The sequence spans 326 residues: L-lactate dehydrogenase (326 aa).

NAD(+) contacts are provided by residues V20, D41, K46, Y71, and G85–A86. Q88 and R94 together coordinate substrate. NAD(+) contacts are provided by residues S107, A124–N126, and S149. N126–D129 contacts substrate. D154–R157 is a substrate binding site. Residues R159, R171 to H174, and H174 each bind beta-D-fructose 1,6-bisphosphate. Residue H181 is the Proton acceptor of the active site. Y226 bears the Phosphotyrosine mark. T235 serves as a coordination point for substrate.

Belongs to the LDH/MDH superfamily. LDH family. In terms of assembly, homotetramer.

Its subcellular location is the cytoplasm. The enzyme catalyses (S)-lactate + NAD(+) = pyruvate + NADH + H(+). The protein operates within fermentation; pyruvate fermentation to lactate; (S)-lactate from pyruvate: step 1/1. Its activity is regulated as follows. Allosterically activated by fructose 1,6-bisphosphate (FBP) alone under acidic conditions, while it requires additional activation factors such as divalent cations (Mn(2+)) under neutral conditions. Under acidic conditions, Mn(2+) is an inhibitor in the absence of fructose 1,6-bisphosphate (FBP). In case of L.casei, L-LDH binds four fructose 1,6-bisphosphate (FBP) molecules per tetramer, while usual allosteric L-LDH binds only two fructose 1,6-bisphosphate (FBP) molecules per tetramer. Catalyzes the conversion of lactate to pyruvate. The protein is L-lactate dehydrogenase of Lacticaseibacillus casei (Lactobacillus casei).